Here is a 238-residue protein sequence, read N- to C-terminus: MRQSGASQPLLINMYLPDPVGDGLFKDGKNPSWGPLSPAVQKGSGQIQLWQFLLELLADRANAGCIAWEGGHGEFKLTDPDEVARRWGERKSKPNMNYDKLSRALRYYYDKNIMSKVHGKRYAYRFDFQGLAQACQPPPAHAHAAAAAAAAAAAAQDGALYKLPAGLAPLPFPGLSKLNLMAASAGVAPAGFSYWPGPGPAATAAAATAALYPSPSLQPPPGPFGAVAAASHLGGHYH.

The segment at residues 47–127 (IQLWQFLLEL…HGKRYAYRFD (81 aa)) is a DNA-binding region (ETS). Positions 129 to 238 (QGLAQACQPP…AASHLGGHYH (110 aa)) are may mediate active transcriptional repression.

Belongs to the ETS family. In brain, exclusively expressed in the major serotonergic neurons of the dorsal and median raphe nuclei located in the midbrain and pons. Also detected in prostate and small intestine.

The protein localises to the nucleus. Functions as a transcriptional regulator. According to PubMed:12761502, it functions as a transcriptional repressor. Functions in the differentiation and the maintenance of the central serotonergic neurons. May play a role in cell growth. The polypeptide is Protein FEV (FEV) (Homo sapiens (Human)).